Consider the following 549-residue polypeptide: Polycomb group RING finger protein 3 homolog mig-32 (549 aa).

The segment at 1–263 (MTRKRPALAE…EESMRQKYGQ (263 aa)) is disordered. Low complexity predominate over residues 12–29 (VSSSRSRVTRRSTTGAPS). Composition is skewed to acidic residues over residues 38 to 49 (PESDADSEDDYD) and 87 to 100 (MDDD…DGEV). A compositionally biased stretch (basic residues) spans 118-130 (KTAKLQTKKKKKK). Residues 134–144 (PETPPTSPSPS) show a composition bias toward pro residues. Residues 145–156 (PSRSVSPSTTKS) are compositionally biased toward low complexity. The segment covering 205–235 (EEIKLRERAERKARRIEEAKNRPKLTIEQKL) has biased composition (basic and acidic residues). Positions 206-260 (EIKLRERAERKARRIEEAKNRPKLTIEQKLAKLRKKKERRERRKEQEKEESMRQK) form a coiled coil. Basic residues predominate over residues 236–247 (AKLRKKKERRER). The segment covering 248–258 (RKEQEKEESMR) has biased composition (basic and acidic residues). The segment at 329 to 368 (CGICDGYIVDATTIIDCMHTFCKSCLLTYFESDNNTCPTC) adopts an RING-type zinc-finger fold.

In terms of assembly, component of a PRC1-like complex.

The protein resides in the nucleus. It is found in the nucleolus. Functionally, component of a Polycomb group (PcG) multiprotein PRC1-like complex, a complex class required to maintain the transcriptionally repressive state of many genes, throughout development. Required for ubiquitination of histone H2A. Plays a role in the formation of the male-specific genital sensilla (simple sense organs) known as rays. Required for normal migration of the hermaphrodite specific neurons (HSN) and for extension of some neuronal processes. Represses vulval fates in hypodermal cells that do not normally contribute to vulval development. The polypeptide is Polycomb group RING finger protein 3 homolog mig-32 (Caenorhabditis elegans).